Here is a 572-residue protein sequence, read N- to C-terminus: Proline--tRNA ligase (572 aa).

Belongs to the class-II aminoacyl-tRNA synthetase family. ProS type 1 subfamily. As to quaternary structure, homodimer.

It localises to the cytoplasm. It carries out the reaction tRNA(Pro) + L-proline + ATP = L-prolyl-tRNA(Pro) + AMP + diphosphate. Catalyzes the attachment of proline to tRNA(Pro) in a two-step reaction: proline is first activated by ATP to form Pro-AMP and then transferred to the acceptor end of tRNA(Pro). As ProRS can inadvertently accommodate and process non-cognate amino acids such as alanine and cysteine, to avoid such errors it has two additional distinct editing activities against alanine. One activity is designated as 'pretransfer' editing and involves the tRNA(Pro)-independent hydrolysis of activated Ala-AMP. The other activity is designated 'posttransfer' editing and involves deacylation of mischarged Ala-tRNA(Pro). The misacylated Cys-tRNA(Pro) is not edited by ProRS. The sequence is that of Proline--tRNA ligase from Caldicellulosiruptor bescii (strain ATCC BAA-1888 / DSM 6725 / KCTC 15123 / Z-1320) (Anaerocellum thermophilum).